We begin with the raw amino-acid sequence, 385 residues long: D-alanyl-D-alanine-carboxypeptidase/endopeptidase AmpH (385 aa).

The first 21 residues, 1–21, serve as a signal peptide directing secretion; the sequence is MKRSLLFSAVLCAASLTSVHA.

This sequence belongs to the beta-lactamase family.

Its subcellular location is the cell inner membrane. Its activity is regulated as follows. Inhibited by cefmetazole. Its function is as follows. Hydrolyzes the cross-linked dimers tetrapentapeptide (D45) and tetratetrapeptide (D44). Removes the terminal D-alanine from muropeptides and disaccharide pentapeptide M5 with a C-terminal D-Ala-D-Ala dipeptide. Associated with recycling and remodeling of peptidoglycan (PG). This chain is D-alanyl-D-alanine-carboxypeptidase/endopeptidase AmpH (ampH), found in Escherichia coli O157:H7.